A 686-amino-acid chain; its full sequence is Endonuclease GajA (686 aa).

Positions 1-423 are ATPase domain; that stretch reads MYLKSLKIYN…NYVTTKNNYT (423 aa). An ATP-binding site is contributed by 52 to 56; the sequence is NCGKT. Positions 463-599 are toprim domain; sequence FFSDAIIFVE…TSFEEAFILT (137 aa). Glu-472, Glu-476, Asp-559, and Glu-604 together coordinate a divalent metal cation.

Homotetramer. Forms the core of the anti-phage defense complex. Interacts with GajB; 2 GajB dimers dock at opposite sides of the GajA complex to form a 4:4 GajA-GajB assembly (GajAB). GajAB interacts with Bacillus phage Phi3T Gad1 protein; this interaction forms a 4:4:8 GajAB-Gad1 complex and leads to GajAB inhibition. Mg(2+) serves as cofactor.

Component of antiviral defense system Gabija type II, composed of GajA and GajB. Probably a nicking endonuclease that is strongly inhibited by physiological levels of nucleotides (NTP and dNTP). Expression of Gabija type II in B.subtilis (strain BEST7003) confers resistance to phages phi105, and SpBeta. During viral replication, when nucleotides are rapidly consumed, it is de-suppressed and degrades target DNA. In Bacillus cereus (strain HuB5-5), this protein is Endonuclease GajA.